The chain runs to 579 residues: MSQQGTIYRVAGPVVTAVGLNARMYDVVKVGNEGLMGEVIEIDNDKAIIQVYEDTSGVRPGEPVENTGMPLSVELGPGLLTSIYDGIQRPLEVLKEKMGNFITRGVSAPGLSRTKKWKFVPVVKAGDKVKGGIVIGTVQETKTIVHKIMVPPNVGETTIKDIKEGEFTVEDVIGHLENGTELKLMHKWPVRVPRPYVEKLRPDIPLITGQRVLDGLFPIAKGGTAAIPGPFGSGKTVTQQQLAKWSDAEIVVYIGCGERGNEMTEVLAEFPHLTDPKTGNPLMDRTVLIANTSNMPVAAREASCYTGITIAEYYRDMGYGVSLMADSTSRWAEAMREISSRLEEMPGEEGYPAYLAARLSEFYERAGRVITPIGKEGSVTVIGAVSPAGGDISEPVTQNTLRIVKVFWALDAKLAQRRHFPSINWLNSYSLYQDSLKDWYDKNISPEWNQLKAESMELLQRESELQEIVQLVGSDALPEDQQLTIEIARMIREIFLQQNAYHEVDTYCSLDKQLKMLKSIMQFGAYARTALASGVPMSKILNLNSKNDLAKVKFEANYDAYLTKVNDDMKKEFKSLEAA.

229–236 serves as a coordination point for ATP; sequence GPFGSGKT.

This sequence belongs to the ATPase alpha/beta chains family. Has multiple subunits with at least A(3), B(3), C, D, E, F, H, I and proteolipid K(x).

It is found in the cell membrane. It catalyses the reaction ATP + H2O + 4 H(+)(in) = ADP + phosphate + 5 H(+)(out). In terms of biological role, component of the A-type ATP synthase that produces ATP from ADP in the presence of a proton gradient across the membrane. The A chain is the catalytic subunit. The sequence is that of A-type ATP synthase subunit A from Methanocella arvoryzae (strain DSM 22066 / NBRC 105507 / MRE50).